The following is a 433-amino-acid chain: Peptidoglycan DD-endopeptidase ShyC (433 aa).

Residues 10–30 form a helical membrane-spanning segment; it reads WLHRVLITAFSAIIVFAIFFL. Zn(2+)-binding residues include His-299, Asp-303, and His-380.

It belongs to the peptidase M23B family. The cofactor is Zn(2+).

It is found in the cell inner membrane. It functions in the pathway cell wall degradation; peptidoglycan degradation. With respect to regulation, reduced activity in 0.5 mM EDTA and a complete loss of activity at higher EDTA concentrations. Functionally, cell wall peptidoglycan (PG) DD-endopeptidase. Hydrolyzes peptide cross-links which covalently connect adjacent PG strands probably to allow insertion of new glycans and thus cell wall expansion. Degrades purified whole PG sacculi in vitro. This is Peptidoglycan DD-endopeptidase ShyC from Vibrio cholerae serotype O1 (strain ATCC 39315 / El Tor Inaba N16961).